A 101-amino-acid chain; its full sequence is Small ribosomal subunit protein uS14 (101 aa).

The protein belongs to the universal ribosomal protein uS14 family. In terms of assembly, part of the 30S ribosomal subunit. Contacts proteins S3 and S10.

In terms of biological role, binds 16S rRNA, required for the assembly of 30S particles and may also be responsible for determining the conformation of the 16S rRNA at the A site. The sequence is that of Small ribosomal subunit protein uS14 from Gluconobacter oxydans (strain 621H) (Gluconobacter suboxydans).